We begin with the raw amino-acid sequence, 229 residues long: N-(5'-phosphoribosyl)anthranilate isomerase (229 aa).

Belongs to the TrpF family.

It carries out the reaction N-(5-phospho-beta-D-ribosyl)anthranilate = 1-(2-carboxyphenylamino)-1-deoxy-D-ribulose 5-phosphate. Its pathway is amino-acid biosynthesis; L-tryptophan biosynthesis; L-tryptophan from chorismate: step 3/5. This Clostridium beijerinckii (strain ATCC 51743 / NCIMB 8052) (Clostridium acetobutylicum) protein is N-(5'-phosphoribosyl)anthranilate isomerase.